The following is a 91-amino-acid chain: Small ribosomal subunit protein uS19 (91 aa).

It belongs to the universal ribosomal protein uS19 family.

Functionally, protein S19 forms a complex with S13 that binds strongly to the 16S ribosomal RNA. The sequence is that of Small ribosomal subunit protein uS19 from Metamycoplasma arthritidis (strain 158L3-1) (Mycoplasma arthritidis).